The primary structure comprises 577 residues: Urease subunit alpha (577 aa).

The 442-residue stretch at 136 to 577 (GGIDCHVHFI…LPMAQRYFLF (442 aa)) folds into the Urease domain. Ni(2+)-binding residues include H141, H143, and K224. K224 carries the N6-carboxylysine modification. H226 provides a ligand contact to substrate. Ni(2+) is bound by residues H253 and H279. The active-site Proton donor is H327. Residue D367 coordinates Ni(2+).

The protein belongs to the metallo-dependent hydrolases superfamily. Urease alpha subunit family. As to quaternary structure, heterotrimer of UreA (gamma), UreB (beta) and UreC (alpha) subunits. Three heterotrimers associate to form the active enzyme. Ni cation is required as a cofactor. Carboxylation allows a single lysine to coordinate two nickel ions.

The protein resides in the cytoplasm. The catalysed reaction is urea + 2 H2O + H(+) = hydrogencarbonate + 2 NH4(+). The protein operates within nitrogen metabolism; urea degradation; CO(2) and NH(3) from urea (urease route): step 1/1. The protein is Urease subunit alpha of Mycobacteroides abscessus (strain ATCC 19977 / DSM 44196 / CCUG 20993 / CIP 104536 / JCM 13569 / NCTC 13031 / TMC 1543 / L948) (Mycobacterium abscessus).